Here is a 131-residue protein sequence, read N- to C-terminus: Small ribosomal subunit protein uS8 (131 aa).

This sequence belongs to the universal ribosomal protein uS8 family. As to quaternary structure, part of the 30S ribosomal subunit. Contacts proteins S5 and S12.

Its function is as follows. One of the primary rRNA binding proteins, it binds directly to 16S rRNA central domain where it helps coordinate assembly of the platform of the 30S subunit. The chain is Small ribosomal subunit protein uS8 from Pelodictyon phaeoclathratiforme (strain DSM 5477 / BU-1).